We begin with the raw amino-acid sequence, 434 residues long: Tryptophan dimethylallyltransferase nptA (434 aa).

L-tryptophan-binding positions include 91–92 (SL) and glutamate 100. The substrate site is built by arginine 115, lysine 202, and tyrosine 204. Tyrosine 206 is an L-tryptophan binding site. Residues arginine 271, lysine 273, tyrosine 275, tyrosine 358, tyrosine 423, and tyrosine 427 each coordinate substrate.

Belongs to the tryptophan dimethylallyltransferase family. As to quaternary structure, homodimer.

It catalyses the reaction L-tryptophan + dimethylallyl diphosphate = 4-(3-methylbut-2-enyl)-L-tryptophan + diphosphate. The protein operates within secondary metabolite biosynthesis. In terms of biological role, nonribosomal peptide synthase involved in the synthesis of nidulanin A and derived compounds. Nidulanin A is a tetracyclopeptide with the sequence L-Phe-L-Kyn-L-Val-D-Val and an isoprene unit N-linked to the amino group of L-kynurenine. The NRPS nlsA is responsible of the synthesis of the cyclopeptide and the prenyltransferase nptA adds the isoprene unit on the L-kynurenine residue of nidulanin A. Further modifications lead to additional oxygenated related compounds. This is Tryptophan dimethylallyltransferase nptA from Emericella nidulans (strain FGSC A4 / ATCC 38163 / CBS 112.46 / NRRL 194 / M139) (Aspergillus nidulans).